We begin with the raw amino-acid sequence, 519 residues long: Importin subunit alpha-9 (519 aa).

The tract at residues 1–29 (MADDGSASNRRDPIKSSVGNVAGQRRRKQ) is disordered. ARM repeat units lie at residues 116-156 (FPPV…NIAA), 158-197 (KPEE…NVAG), 200-239 (EDLR…NLIK), 244-283 (KAAA…YLSA), 286-326 (DIAT…NFVA), 335-374 (ILIR…NIAA), 377-416 (IEHK…NLCV), and 429-468 (QEHL…LVLR).

It belongs to the importin alpha family. In terms of assembly, forms a complex with importin subunit beta-1.

It is found in the nucleus envelope. Binds to conventional NLS motifs and mediates nuclear protein import across the nuclear envelope. Acts as a cellular receptor for the nuclear import of the virD2 protein of Agrobacterium, but is not essential for Agrobacterium-mediated root transformation. In Arabidopsis thaliana (Mouse-ear cress), this protein is Importin subunit alpha-9.